A 182-amino-acid chain; its full sequence is MGKPNLKDQIKQLYLVLLEEIKIFILTIKLVISKKNVWIISYYHFLKKVVVSKKQILNLSRLLLRFTLLSIFILFVLDLISKYITAPILTGIFNFIFKILISLVNLLYKAIYWIYIIFAIFLHFMNYLLVLLELTLQPIFEWIEIFFFNSLIYFLKLIFLLYSNFEKGILIFLMWLKSRIKK.

The protein localises to the plastid. Its subcellular location is the cyanelle. This is an uncharacterized protein from Cyanophora paradoxa.